Here is a 357-residue protein sequence, read N- to C-terminus: Geranylgeranyl pyrophosphate synthase spyE (357 aa).

Residues 36-60 (EAQSQAVPGTRTETEPTGSSPSDLQ) are disordered. Residues 50-59 (EPTGSSPSDL) are compositionally biased toward polar residues. Isopentenyl diphosphate contacts are provided by lysine 84, arginine 87, and histidine 116. Mg(2+) contacts are provided by aspartate 123 and aspartate 127. Arginine 132 contacts dimethylallyl diphosphate. Arginine 133 contacts isopentenyl diphosphate. The dimethylallyl diphosphate site is built by lysine 210, threonine 211, and glutamine 244. Aspartate 247 provides a ligand contact to Mg(2+). Residues asparagine 251, lysine 261, and lysine 271 each coordinate dimethylallyl diphosphate.

Belongs to the FPP/GGPP synthase family. Mg(2+) is required as a cofactor.

It carries out the reaction isopentenyl diphosphate + dimethylallyl diphosphate = (2E)-geranyl diphosphate + diphosphate. The enzyme catalyses isopentenyl diphosphate + (2E)-geranyl diphosphate = (2E,6E)-farnesyl diphosphate + diphosphate. The catalysed reaction is isopentenyl diphosphate + (2E,6E)-farnesyl diphosphate = (2E,6E,10E)-geranylgeranyl diphosphate + diphosphate. It functions in the pathway secondary metabolite biosynthesis; terpenoid biosynthesis. Geranylgeranyl pyrophosphate synthase; part of the gene cluster that mediates the biosynthesis of meroterpenoids called sartorypyrones. Within the pathway, spyE provides the spyF cosubstrate geranylgeranyl pyrophosphate (GGPP) for the prenylation of triacetic acid lactone (TAL). The biosynthesis of sartorypyrones begins with the production of triacetic acid lactone (TAL) by the NR-PKS spyA using one molecule of acetyl-CoA and two molecules of malonyl-CoA. The prenyltransferase spyF then conjugates geranylgeranyl pyrophosphate (GGPP) to TAL to form geranylgeranyl-triacetate lactone, for which the pathway-specific geranylgeranyl pyrophosphate synthase (GGPS) spyE is required to provide GGPP. Subsequently, geranylgeranyl-triacetate lactone is epoxidized at the terminal olein by the FAD-dependent monooxygenase spyC, followed by cyclization of the terpenoid component catalyzed by the terpene cyclase spyD to produce both the bicyclic sartorypyrone F and the monocyclic sartorypyrone D. Finally, the last step of the biosynthesis involves the acetylation of the meroterpenoids sartorypyrones D and F by the acetyltransferase SpyB to produce sartorypyrones A and G, respectively. The chain is Geranylgeranyl pyrophosphate synthase spyE from Aspergillus fumigatus (strain ATCC MYA-4609 / CBS 101355 / FGSC A1100 / Af293) (Neosartorya fumigata).